The sequence spans 280 residues: Probable holocytochrome-c-type synthase (280 aa).

Residues 1 to 95 are disordered; it reads MGSSQSTPKV…FALPTKREKS (95 aa). HRM repeat units lie at residues 35 to 40 and 56 to 61; these read QCPLTP and ACPVGA.

This sequence belongs to the cytochrome c-type heme lyase family.

The protein localises to the mitochondrion inner membrane. It carries out the reaction holo-[cytochrome c] = apo-[cytochrome c] + heme b. Probable lyase that catalyzes the covalent linking of the heme group to the cytochrome C apoprotein to produce the mature functional cytochrome. This Caenorhabditis elegans protein is Probable holocytochrome-c-type synthase (cchl-1).